We begin with the raw amino-acid sequence, 330 residues long: NADH-quinone oxidoreductase subunit H (330 aa).

A run of 8 helical transmembrane segments spans residues 5–25 (LLTL…VLTL), 78–98 (WVFM…FAVI), 120–140 (IGLL…ALGG), 155–175 (AMAQ…PVVM), 191–211 (SLPN…AIMA), 243–263 (FFVG…VLFL), 271–291 (LPGI…FIWV), and 308–328 (WKIL…WLIW).

The protein belongs to the complex I subunit 1 family. In terms of assembly, NDH-1 is composed of 14 different subunits. Subunits NuoA, H, J, K, L, M, N constitute the membrane sector of the complex.

The protein localises to the cell inner membrane. It catalyses the reaction a quinone + NADH + 5 H(+)(in) = a quinol + NAD(+) + 4 H(+)(out). In terms of biological role, NDH-1 shuttles electrons from NADH, via FMN and iron-sulfur (Fe-S) centers, to quinones in the respiratory chain. The immediate electron acceptor for the enzyme in this species is believed to be ubiquinone. Couples the redox reaction to proton translocation (for every two electrons transferred, four hydrogen ions are translocated across the cytoplasmic membrane), and thus conserves the redox energy in a proton gradient. This subunit may bind ubiquinone. This is NADH-quinone oxidoreductase subunit H from Syntrophotalea carbinolica (strain DSM 2380 / NBRC 103641 / GraBd1) (Pelobacter carbinolicus).